The chain runs to 250 residues: MSTNMREMLEAGVHFGHQTRFWDPKMAPYIFGHRNRIHIINLEKSLPMFQEAMKFAKQLTANRGTILMVGTKRTARETVAAEAQRAGIPYVDQRWLGGMLTNFKTVKTSIKRLKEMKAQQEAGLDSISKKEQLTFKREIEKLEKDIGGIQDMTALPDAIFVIDVGFHKIAILEAKKLGIPLIGVVDTNHSPLGIDYVIPGNDDSSKAVALYARGIADAVIEGRASAMDDVVKAVSAEGSDEFVEVENAAA.

This sequence belongs to the universal ribosomal protein uS2 family.

This Polaromonas naphthalenivorans (strain CJ2) protein is Small ribosomal subunit protein uS2.